A 130-amino-acid chain; its full sequence is Large ribosomal subunit protein bL17 (130 aa).

Belongs to the bacterial ribosomal protein bL17 family. As to quaternary structure, part of the 50S ribosomal subunit. Contacts protein L32.

The sequence is that of Large ribosomal subunit protein bL17 from Nitrosomonas europaea (strain ATCC 19718 / CIP 103999 / KCTC 2705 / NBRC 14298).